The sequence spans 125 residues: Large ribosomal subunit protein bL12 (125 aa).

The disordered stretch occupies residues 95–125 (APKPIKEGVDKKTAEEAKKKLEEAGAKAELK).

It belongs to the bacterial ribosomal protein bL12 family. In terms of assembly, homodimer. Part of the ribosomal stalk of the 50S ribosomal subunit. Forms a multimeric L10(L12)X complex, where L10 forms an elongated spine to which 2 to 4 L12 dimers bind in a sequential fashion. Binds GTP-bound translation factors.

In terms of biological role, forms part of the ribosomal stalk which helps the ribosome interact with GTP-bound translation factors. Is thus essential for accurate translation. The sequence is that of Large ribosomal subunit protein bL12 from Polynucleobacter necessarius subsp. necessarius (strain STIR1).